The chain runs to 79 residues: MAEAGARRPFFRRRKTCPFTGPNAPKIDYKDSKLLMRYVSERGKIVPSRITAVSAKKQRELARAIKRARFLGLLPYVIR.

Belongs to the bacterial ribosomal protein bS18 family. As to quaternary structure, part of the 30S ribosomal subunit. Forms a tight heterodimer with protein bS6.

Functionally, binds as a heterodimer with protein bS6 to the central domain of the 16S rRNA, where it helps stabilize the platform of the 30S subunit. This Rhodopseudomonas palustris (strain HaA2) protein is Small ribosomal subunit protein bS18.